The chain runs to 361 residues: Methylthioribose-1-phosphate isomerase (361 aa).

The active-site Proton donor is the Asp-245.

It belongs to the eIF-2B alpha/beta/delta subunits family. MtnA subfamily.

The protein localises to the cytoplasm. Its subcellular location is the nucleus. The enzyme catalyses 5-(methylsulfanyl)-alpha-D-ribose 1-phosphate = 5-(methylsulfanyl)-D-ribulose 1-phosphate. Its pathway is amino-acid biosynthesis; L-methionine biosynthesis via salvage pathway; L-methionine from S-methyl-5-thio-alpha-D-ribose 1-phosphate: step 1/6. Its function is as follows. Catalyzes the interconversion of methylthioribose-1-phosphate (MTR-1-P) into methylthioribulose-1-phosphate (MTRu-1-P). The protein is Methylthioribose-1-phosphate isomerase of Monosiga brevicollis (Choanoflagellate).